A 156-amino-acid polypeptide reads, in one-letter code: MNPPIARQLNLDETKLPAEIFERLSRRGATLKDYRRRREEAIENFGKPGRDPAELGSVMTTIAGNGVWAANMKLAQLRNHWDQVVGQAIASHSAVADFTDGVLTIRAESTVWATQLTYLIPQLTDTIRRNLKGLTITEIRVTGPAAGYTRKWARRR.

This sequence belongs to the UPF0232 family.

This is UPF0232 protein BL0636 from Bifidobacterium longum (strain NCC 2705).